We begin with the raw amino-acid sequence, 259 residues long: Protein unc-50 homolog A (259 aa).

At 1 to 82 (MLPTTSVSPR…TKDQWARDDP (82 aa)) the chain is on the cytoplasmic side. The chain crosses the membrane as a helical span at residues 83–103 (AFLVLLSIWLCVSTVGFGFVL). Residues 104 to 112 (DMSFFETFK) lie on the Lumenal side of the membrane. The helical transmembrane segment at 113–133 (LLLWVVFIDCVGVGLLIATLM) threads the bilayer. The Cytoplasmic segment spans residues 134-158 (WFVSNKYMVKRQGKDYDVEWGYTFD). A helical membrane pass occupies residues 159–179 (VHLNAFYPLLVILHFIQLFFI). The Lumenal segment spans residues 180–181 (NH). Residues 182–202 (VILSGWFIGYFVGNTIWLIAI) traverse the membrane as a helical segment. The Cytoplasmic portion of the chain corresponds to 203–222 (GYYIYITFLGYSALPFLKNT). The helical transmembrane segment at 223-243 (VILLYPFAALALLYVLSLALG) threads the bilayer. Topologically, residues 244-259 (WNFTEKLCLFYKYRVR) are lumenal.

This sequence belongs to the unc-50 family.

The protein resides in the nucleus inner membrane. It is found in the golgi apparatus membrane. Its function is as follows. Involved in the cell surface expression of neuronal nicotinic receptors. Binds RNA. In Xenopus laevis (African clawed frog), this protein is Protein unc-50 homolog A (unc50-a).